Here is a 421-residue protein sequence, read N- to C-terminus: 3-isopropylmalate dehydratase large subunit (421 aa).

Cysteine 302, cysteine 362, and cysteine 365 together coordinate [4Fe-4S] cluster.

It belongs to the aconitase/IPM isomerase family. LeuC type 2 subfamily. As to quaternary structure, heterodimer of LeuC and LeuD. [4Fe-4S] cluster is required as a cofactor.

It catalyses the reaction (2R,3S)-3-isopropylmalate = (2S)-2-isopropylmalate. It participates in amino-acid biosynthesis; L-leucine biosynthesis; L-leucine from 3-methyl-2-oxobutanoate: step 2/4. Its function is as follows. Catalyzes the isomerization between 2-isopropylmalate and 3-isopropylmalate, via the formation of 2-isopropylmaleate. This is 3-isopropylmalate dehydratase large subunit from Campylobacter curvus (strain 525.92).